The primary structure comprises 342 residues: 4-hydroxy-2-oxovalerate aldolase 2 (342 aa).

Residues 8–260 (ITVHDMTLRD…ETGVDVFKIQ (253 aa)) enclose the Pyruvate carboxyltransferase domain. 16 to 17 (RD) is a substrate binding site. A Mn(2+)-binding site is contributed by aspartate 17. Catalysis depends on histidine 20, which acts as the Proton acceptor. Substrate is bound by residues serine 170 and histidine 199. Mn(2+)-binding residues include histidine 199 and histidine 201. Tyrosine 290 serves as a coordination point for substrate.

It belongs to the 4-hydroxy-2-oxovalerate aldolase family.

It carries out the reaction (S)-4-hydroxy-2-oxopentanoate = acetaldehyde + pyruvate. The protein is 4-hydroxy-2-oxovalerate aldolase 2 (mhpE) of Azoarcus sp. (strain BH72).